The chain runs to 715 residues: Serine/arginine repetitive matrix protein 5 (715 aa).

Positions 1 to 13 (MSSPKRSSKPSMS) are enriched in low complexity. The interval 1 to 715 (MSSPKRSSKP…RSSSSSSKLA (715 aa)) is disordered. A compositionally biased stretch (polar residues) spans 32-59 (LKSTKSATPNRSLVPTKPATSRNSVMSP). Residues 60 to 79 (SSSKSTKSTSTKRAPSNRPS) are compositionally biased toward low complexity. The segment covering 80–90 (SRSRVRSKART) has biased composition (basic residues). The segment covering 92–104 (SRVSTDTRTSKAS) has biased composition (polar residues). Over residues 112-136 (HQRRGTHSRGRTPGRRGSRSSKRSP) the composition is skewed to basic residues. Polar residues-rich tracts occupy residues 213-224 (TPSTAKCQTPTG) and 257-272 (YSPTEMSSRVKSYNQA). A compositionally biased stretch (low complexity) spans 273–285 (STRSRPQSHSQSR). A compositionally biased stretch (basic residues) spans 286-320 (SPRRSRSGSQKRTHSRVRSHSWKRNHSRARSRTRK). Composition is skewed to basic and acidic residues over residues 359-388 (PSKERSHSHSRSSSKERDHRGSSSPRKESG) and 397-521 (KQRD…ERDH). Residues 522-536 (RRSRSPSKERQRRQS) are compositionally biased toward basic residues. 2 stretches are compositionally biased toward basic and acidic residues: residues 539 to 595 (PNKE…DHSR) and 611 to 628 (SSKEKAHSRSRTPSKEGN). The span at 657–666 (TRTSSLSQNR) shows a compositional bias: polar residues. Positions 667-681 (TPSKTSSHSPSTFPS) are enriched in low complexity. The segment covering 682 to 715 (GGQTLSQDDSQADATTSKATLPGERSSSSSSKLA) has biased composition (polar residues).

This Homo sapiens (Human) protein is Serine/arginine repetitive matrix protein 5 (SRRM5).